The primary structure comprises 234 residues: Nitroreductase NfnB (234 aa).

Position 25–29 (25–29) interacts with FMN; it reads RRAVR. 4 residues coordinate NADP(+): Ser55, Arg105, Tyr113, and Ile118. Residues Tyr137, 181–182, and Arg223 each bind FMN; that span reads AL.

Belongs to the nitroreductase family. As to quaternary structure, homodimer. Requires FMN as cofactor.

Functionally, confers resistance to antitubercular drugs benzothiazinone (BTZ) and dinitrobenzamide (DNB). Inactivates BTZ and DNB by reducing an essential nitro group of these compounds to amino group or to hydroxyl amine, respectively, using NADH or NADPH as source of reducing equivalents; two electrons are transferred. Able to reduce the nitro group of bicyclic nitroimidazole PA-824, but not of quinone menadione, nitrofurazone, methyl-4-nitrobenzoate, 4-nitrobenzene methyl sulfonate or 4-nitroacetophenone. This is Nitroreductase NfnB from Mycolicibacterium smegmatis (strain ATCC 700084 / mc(2)155) (Mycobacterium smegmatis).